The primary structure comprises 132 residues: ATP synthase epsilon chain (132 aa).

Belongs to the ATPase epsilon chain family. In terms of assembly, F-type ATPases have 2 components, CF(1) - the catalytic core - and CF(0) - the membrane proton channel. CF(1) has five subunits: alpha(3), beta(3), gamma(1), delta(1), epsilon(1). CF(0) has three main subunits: a, b and c.

The protein localises to the cell inner membrane. In terms of biological role, produces ATP from ADP in the presence of a proton gradient across the membrane. The protein is ATP synthase epsilon chain of Cereibacter sphaeroides (strain ATCC 17025 / ATH 2.4.3) (Rhodobacter sphaeroides).